Consider the following 338-residue polypeptide: tRNA N6-adenosine threonylcarbamoyltransferase (338 aa).

The Fe cation site is built by H111 and H115. Substrate contacts are provided by residues 134–138 (LLSGG), D167, G180, and N275. D304 is a Fe cation binding site.

The protein belongs to the KAE1 / TsaD family. The cofactor is Fe(2+).

The protein localises to the cytoplasm. It catalyses the reaction L-threonylcarbamoyladenylate + adenosine(37) in tRNA = N(6)-L-threonylcarbamoyladenosine(37) in tRNA + AMP + H(+). Required for the formation of a threonylcarbamoyl group on adenosine at position 37 (t(6)A37) in tRNAs that read codons beginning with adenine. Is involved in the transfer of the threonylcarbamoyl moiety of threonylcarbamoyl-AMP (TC-AMP) to the N6 group of A37, together with TsaE and TsaB. TsaD likely plays a direct catalytic role in this reaction. The polypeptide is tRNA N6-adenosine threonylcarbamoyltransferase (Leptospira borgpetersenii serovar Hardjo-bovis (strain JB197)).